A 530-amino-acid polypeptide reads, in one-letter code: Cation channel sperm-associated protein 2 (530 aa).

The Cytoplasmic portion of the chain corresponds to 1–108 (MAAYQQEEQM…LWAGWVLECP (108 aa)). The chain crosses the membrane as a helical span at residues 109-131 (LFKNFIIFLVFLNTIILMVEIEL). Residues 132–140 (LESTNTKLW) lie on the Extracellular side of the membrane. The helical transmembrane segment at 141-166 (PLKLTLEVAAWFILLIFILEILLKWL) threads the bilayer. Over 167–175 (SNFSVFWKS) the chain is Cytoplasmic. A helical transmembrane segment spans residues 176–200 (AWNVFDFVVTMLSLLPEVVVLVGVT). Over 201–203 (GQS) the chain is Extracellular. The chain crosses the membrane as a helical span at residues 204–222 (VWLQLLRICRVLRSLKLLA). Residues 223 to 239 (QFRQIQIIILVLVRALK) are Cytoplasmic-facing. Residues 240–262 (SMTFLLMLLLIFFYIFAVTGVYV) traverse the membrane as a helical segment. Residues 263–281 (FSEYTRSPRQDLEYHVFFS) lie on the Extracellular side of the membrane. An intramembrane region (helical; Pore-forming) is located at residues 282 to 294 (DLPNSLVTVFILF). The Extracellular portion of the chain corresponds to 295–314 (TLDHWYALLQDVWKVPEVSR). A helical membrane pass occupies residues 315–341 (IFSSIYFILWLLLGSIIFRSIIVAMMV). Over 342–530 (TNFQNIRKEL…VQALMNLEDK (189 aa)) the chain is Cytoplasmic. The interval 378-458 (MSHEALTSSH…TSSSYSSSSE (81 aa)) is disordered. The segment covering 429-440 (KTEETLSKKREY) has biased composition (basic and acidic residues). The span at 442–458 (SSSCVSSTSSSYSSSSE) shows a compositional bias: low complexity.

The protein belongs to the cation channel sperm-associated (TC 1.A.1.19) family. In terms of assembly, component of the CatSper complex or CatSpermasome composed of the core pore-forming members CATSPER1, CATSPER2, CATSPER3 and CATSPER4 as well as auxiliary members CATSPERB, CATSPERG, CATSPERD, CATSPERE, CATSPERZ, C2CD6/CATSPERT, TMEM249, TMEM262 and EFCAB9. HSPA1 may be an additional auxiliary complex member. The core complex members CATSPER1, CATSPER2, CATSPER3 and CATSPER4 form a heterotetrameric channel. The auxiliary CATSPERB, CATSPERG, CATSPERD and CATSPERE subunits form a pavilion-like structure over the pore which stabilizes the complex through interactions with CATSPER4, CATSPER3, CATSPER1 and CATSPER2 respectively. TMEM262/CATSPERH interacts with CATSPERB, further stabilizing the complex. C2CD6/CATSPERT interacts at least with CATSPERD and is required for targeting the CatSper complex in the flagellar membrane. Interacts with Ca(v)3.3/CACNA1I, leading to suppression of T-type calcium channel activity. Testis-specific.

The protein localises to the cell projection. It localises to the cilium. The protein resides in the flagellum membrane. It catalyses the reaction Ca(2+)(in) = Ca(2+)(out). The CatSper calcium channel is indirectly activated by extracellular progesterone and prostaglandins following the sequence: progesterone &gt; PGF1-alpha = PGE1 &gt; PGA1 &gt; PGE2 &gt;&gt; PGD2. The CatSper calcium channel is directly inhibited by endocannabinoid 2-arachidonoylglycerol (2AG). Indirect activation by progesterone takes place via the following mechanism: progesterone binds and activates the acylglycerol lipase ABHD2, which in turn mediates hydrolysis of 2AG inhibitor, relieving inhibition of the CatSper channel. The primary effect of progesterone activation is to shift voltage dependence towards more physiological, negative membrane potentials; it is not mediated by metabotropic receptors and second messengers. Sperm capacitation enhances the effect of progesterone by providing additional negative shift. Also activated by the elevation of intracellular pH. In terms of biological role, pore-forming subunit of the CatSper complex, a sperm-specific voltage-gated calcium channel, that plays a central role in calcium-dependent physiological responses essential for successful fertilization, such as sperm hyperactivation, acrosome reaction and chemotaxis towards the oocyte. The sequence is that of Cation channel sperm-associated protein 2 (CATSPER2) from Homo sapiens (Human).